The following is a 373-amino-acid chain: Ferroptosis suppressor protein 1 (373 aa).

Gly2 carries N-myristoyl glycine lipidation. Residues 7 to 27 traverse the membrane as a helical segment; it reads VDTGAVHVVIVGGGFGGIAAA. 6-hydroxy-FAD-binding positions include 18-22, Arg54, and Val82; that span reads GGGFG. An N6-acetyllysine modification is found at Lys168. 6-hydroxy-FAD is bound at residue Asp285.

This sequence belongs to the FAD-dependent oxidoreductase family. In terms of assembly, interacts with importin subunits KPNA2 and IPO5; this interaction likely mediates the translocation into the nucleus upon oxidative stress. 6-hydroxy-FAD serves as cofactor. N-myristoylation at Gly-2 mediates the recruitment to lipid droplets and plasma membrane. In terms of processing, acetylation at Lys-168 prevents AIFM2 ubiquitination and degradation, thereby inhibiting ferroptosis. KAT2B mediates acetylation at Lys-168, while HDAC3 removes it. Post-translationally, ubiquitinated. AIFM2 undergoes 'Lys-29'-ubiquitination and proteasomal degradation, which is inhibited by acetylation at Lys-168. Detected in most normal tissues as two transcripts of 1.8 and 4.0 kb in length, respectively. Highly expressed in liver, testis, and kidney, and expressed at lower levels in pancreas, spleen, brain and lung. Expressed in heart (at protein level).

The protein localises to the lipid droplet. It is found in the cell membrane. The protein resides in the cytoplasm. It localises to the mitochondrion membrane. Its subcellular location is the nucleus. It carries out the reaction ubiquinone-10 + NADH + H(+) = ubiquinol-10 + NAD(+). It catalyses the reaction phylloquinone + NADH + H(+) = phylloquinol + NAD(+). The enzyme catalyses menaquinone-4 + NADH + H(+) = menaquinol-4 + NAD(+). The catalysed reaction is menadione + NADH + H(+) = menadiol + NAD(+). Its activity is regulated as follows. The modification by 4-hydroxy-2-nonenal (HNE) adduction in mitochondria results in loss of the oxidoreductase activity and activation of a novel function in mitochondrial oxidative stress signaling. An NAD(P)H-dependent oxidoreductase that acts as a key inhibitor of ferroptosis. At the plasma membrane, catalyzes reduction of coenzyme Q/ubiquinone-10 to ubiquinol-10, a lipophilic radical-trapping antioxidant that prevents lipid oxidative damage and consequently ferroptosis. Acts in parallel to GPX4 to suppress phospholipid peroxidation and ferroptosis. This anti-ferroptotic function is independent of cellular glutathione levels. Also acts as a potent radical-trapping antioxidant by mediating warfarin-resistant vitamin K reduction in the canonical vitamin K cycle: catalyzes NAD(P)H-dependent reduction of vitamin K (phylloquinone, menaquinone-4 and menadione) to hydroquinone forms. Hydroquinones act as potent radical-trapping antioxidants inhibitor of phospholipid peroxidation and ferroptosis. May play a role in mitochondrial stress signaling. Upon oxidative stress, associates with the lipid peroxidation end product 4-hydroxy-2-nonenal (HNE) forming a lipid adduct devoid of oxidoreductase activity, which then translocates from mitochondria into the nucleus triggering DNA damage and cell death. In Mus musculus (Mouse), this protein is Ferroptosis suppressor protein 1.